A 165-amino-acid chain; its full sequence is Large ribosomal subunit protein uL30 (165 aa).

Belongs to the universal ribosomal protein uL30 family. As to quaternary structure, part of the 50S ribosomal subunit.

The chain is Large ribosomal subunit protein uL30 from Thermoplasma volcanium (strain ATCC 51530 / DSM 4299 / JCM 9571 / NBRC 15438 / GSS1).